The primary structure comprises 953 residues: Calcium-transporting ATPase type 2C member 1 (953 aa).

The Cytoplasmic segment spans residues 1–104; sequence MDNLLPQSRF…NEFDISEDEP (104 aa). The helical transmembrane segment at 105 to 125 threads the bilayer; the sequence is LWKKYISQFKNPLIMLLLASA. Topologically, residues 126–138 are lumenal; it reads VISVLMHQFDDAV. A helical transmembrane segment spans residues 139–157; it reads SITVAILIVVTVAFVQEYR. The Cytoplasmic segment spans residues 158 to 296; sequence SEKSLEELSK…APKTPLQKSM (139 aa). Residues 297–316 form a helical membrane-spanning segment; sequence DLLGKQLSFYSFGIIGIIML. Residues 317–328 are Lumenal-facing; that stretch reads VGWLLGKDILEM. Residues 329–346 traverse the membrane as a helical segment; sequence FTISVSLAVAAIPEGLPI. Ca(2+)-binding residues include Val-337, Ala-338, Ile-340, and Glu-342. The Cytoplasmic segment spans residues 347–733; that stretch reads VVTVTLALGV…EEGKGIYNNI (387 aa). Catalysis depends on Asp-384, which acts as the 4-aspartylphosphate intermediate. 2 residues coordinate Mg(2+): Asp-678 and Asp-682. The helical transmembrane segment at 734–753 threads the bilayer; the sequence is KNFVRFQLSTSIAALTLISL. At 754 to 763 the chain is on the lumenal side; that stretch reads ATLMNFPNPL. Residues 764–784 traverse the membrane as a helical segment; that stretch reads NAMQILWINIIMDGPPAQSLG. Residues Asn-772 and Asp-776 each coordinate Ca(2+). Over 785–804 the chain is Cytoplasmic; sequence VEPVDKDVIRKPPRNWKDSI. A helical transmembrane segment spans residues 805-824; the sequence is LTKNLILKILVSSIIIVCGT. The Lumenal portion of the chain corresponds to 825 to 842; the sequence is LFVFWRELRDNVITPRDT. A helical transmembrane segment spans residues 843-862; that stretch reads TMTFTCFVFFDMFNALSSRS. Over 863 to 875 the chain is Cytoplasmic; it reads QTKSVFEIGLCSN. Residues 876 to 894 form a helical membrane-spanning segment; sequence KMFCYAVLGSIMGQLLVIY. Residues 895–909 are Lumenal-facing; it reads FPPLQKVFQTESLSI. The chain crosses the membrane as a helical span at residues 910–930; the sequence is LDLLFLLGLTSSVCIVAEIIK. Over 931–953 the chain is Cytoplasmic; it reads KVERSREKIQKPVSSTSSSFLEV.

This sequence belongs to the cation transport ATPase (P-type) (TC 3.A.3) family. Type IIA subfamily. As to quaternary structure, monomer. Homodimer.

It is found in the golgi apparatus. The protein localises to the trans-Golgi network membrane. The protein resides in the golgi stack membrane. It catalyses the reaction Ca(2+)(in) + ATP + H2O = Ca(2+)(out) + ADP + phosphate + H(+). The catalysed reaction is Mn(2+)(in) + ATP + H2O = Mn(2+)(out) + ADP + phosphate + H(+). Its function is as follows. ATP-driven pump that supplies the Golgi apparatus with Ca(2+) and Mn(2+) ions, both essential cofactors for processing and trafficking of newly synthesized proteins in the secretory pathway. Within a catalytic cycle, acquires Ca(2+) or Mn(2+) ions on the cytoplasmic side of the membrane and delivers them to the lumenal side. The transfer of ions across the membrane is coupled to ATP hydrolysis and is associated with a transient phosphorylation that shifts the pump conformation from inward-facing to outward-facing state. Plays a primary role in the maintenance of Ca(2+) homeostasis in the trans-Golgi compartment with a functional impact on Golgi and post-Golgi protein sorting as well as a structural impact on cisternae morphology. Responsible for loading the Golgi stores with Ca(2+) ions in keratinocytes, contributing to keratinocyte differentiation and epidermis integrity. Participates in Ca(2+) and Mn(2+) ions uptake into the Golgi store of hippocampal neurons and regulates protein trafficking required for neural polarity. May also play a role in the maintenance of Ca(2+) and Mn(2+) homeostasis and signaling in the cytosol while preventing cytotoxicity. The chain is Calcium-transporting ATPase type 2C member 1 (ATP2C1) from Bos taurus (Bovine).